The sequence spans 258 residues: Thiazole synthase (258 aa).

The Schiff-base intermediate with DXP role is filled by Lys-96. 1-deoxy-D-xylulose 5-phosphate is bound by residues Gly-157, 183–184 (AG), and 205–206 (NT).

This sequence belongs to the ThiG family. In terms of assembly, homotetramer. Forms heterodimers with either ThiH or ThiS.

The protein localises to the cytoplasm. The catalysed reaction is [ThiS sulfur-carrier protein]-C-terminal-Gly-aminoethanethioate + 2-iminoacetate + 1-deoxy-D-xylulose 5-phosphate = [ThiS sulfur-carrier protein]-C-terminal Gly-Gly + 2-[(2R,5Z)-2-carboxy-4-methylthiazol-5(2H)-ylidene]ethyl phosphate + 2 H2O + H(+). The protein operates within cofactor biosynthesis; thiamine diphosphate biosynthesis. Its function is as follows. Catalyzes the rearrangement of 1-deoxy-D-xylulose 5-phosphate (DXP) to produce the thiazole phosphate moiety of thiamine. Sulfur is provided by the thiocarboxylate moiety of the carrier protein ThiS. In vitro, sulfur can be provided by H(2)S. This is Thiazole synthase from Alkaliphilus metalliredigens (strain QYMF).